Consider the following 465-residue polypeptide: Hepatocyte nuclear factor 6 (465 aa).

Disordered regions lie at residues 17-55 (SHEP…SMGM), 120-141 (DKFP…HQRL), 264-290 (LLGT…GQME), and 442-465 (DKWQ…CTKA). Basic residues predominate over residues 123–140 (PHHHHHHHHHHHPHHHQR). A compositionally biased stretch (polar residues) spans 273 to 288 (PSVTGAQVSNGSNSGQ). A DNA-binding region (CUT) is located at residues 283–369 (GSNSGQMEEI…QRMSALRLAA (87 aa)). Positions 385–444 (PKKPRLVFTDVQRRTLHAIFKENKRPSKELQITISQQLGLELSTVSNFFMNARRRSLDKW) form a DNA-binding region, homeobox. Positions 448 to 465 (GSSNSGNSSSSSSTCTKA) are enriched in low complexity.

Belongs to the CUT homeobox family. In terms of assembly, binds DNA as a monomer. As to expression, highly expressed in liver; lower expression in testis and skin.

The protein resides in the nucleus. Transcriptional activator. Binds the consensus sequence 5'-DHWATTGAYTWWD-3' on a variety of gene promoters such as those of HNF3B and TTR. Important for liver genes transcription. The sequence is that of Hepatocyte nuclear factor 6 (ONECUT1) from Homo sapiens (Human).